The chain runs to 717 residues: Ubinuclein-2 (717 aa).

Disordered stretches follow at residues K114 to S136, L166 to S308, and A620 to S717. The span at D118 to S136 shows a compositional bias: acidic residues. Polar residues-rich tracts occupy residues Q214–D246 and S285–S308. Residues S623–E632 are compositionally biased toward basic and acidic residues. The Nuclear localization signal motif lies at L634–S641. The span at K653–A665 shows a compositional bias: basic and acidic residues. The segment covering R675 to A705 has biased composition (basic residues). Over residues K706–S717 the composition is skewed to polar residues.

The protein belongs to the ubinuclein family. In terms of assembly, component of the HIRA complex made of UBN1, UBN2, ASF1A, CABIN1 and HIRA. Interacts with HIRA.

The protein localises to the nucleus. The protein resides in the nucleolus. Functionally, may be required for replication-independent chromatin assembly. The sequence is that of Ubinuclein-2 from Arabidopsis thaliana (Mouse-ear cress).